The chain runs to 260 residues: Flavin-dependent thymidylate synthase (260 aa).

The ThyX domain maps to 2–203; the sequence is ISVKLVSYTN…PRLFKYTGPN (202 aa). FAD-binding positions include Ser-56, 80-82, and Gln-88; that span reads RHR. Residues 77–80, 88–92, and Arg-142 each bind dUMP; these read QLVR and QMSHR. The ThyX motif motif lies at 80 to 90; that stretch reads RHRIASYTQMS. Residues 158 to 160 and Asn-164 each bind FAD; that span reads NAR. Arg-169 provides a ligand contact to dUMP. Arg-169 (involved in ionization of N3 of dUMP, leading to its activation) is an active-site residue.

The protein belongs to the thymidylate synthase ThyX family. In terms of assembly, homotetramer. Requires FAD as cofactor.

It catalyses the reaction dUMP + (6R)-5,10-methylene-5,6,7,8-tetrahydrofolate + NADPH + H(+) = dTMP + (6S)-5,6,7,8-tetrahydrofolate + NADP(+). Its pathway is pyrimidine metabolism; dTTP biosynthesis. In terms of biological role, catalyzes the reductive methylation of 2'-deoxyuridine-5'-monophosphate (dUMP) to 2'-deoxythymidine-5'-monophosphate (dTMP) while utilizing 5,10-methylenetetrahydrofolate (mTHF) as the methyl donor, and NADPH and FADH(2) as the reductant. This chain is Flavin-dependent thymidylate synthase, found in Saccharolobus solfataricus (strain ATCC 35092 / DSM 1617 / JCM 11322 / P2) (Sulfolobus solfataricus).